The primary structure comprises 264 residues: Putative hydro-lyase cgR_2449 (264 aa).

This sequence belongs to the D-glutamate cyclase family.

The polypeptide is Putative hydro-lyase cgR_2449 (Corynebacterium glutamicum (strain R)).